Here is a 184-residue protein sequence, read N- to C-terminus: F(420)H(2) dehydrogenase subunit B (184 aa).

The tract at residues 1–20 is disordered; sequence MGEVKETKTNNSKENPEEEV. Residues cysteine 61, cysteine 62, cysteine 126, and cysteine 156 each coordinate [4Fe-4S] cluster.

The protein belongs to the complex I 20 kDa subunit family. In terms of assembly, the FPO complex is composed of at least 13 different subunits. Requires FAD as cofactor. It depends on [4Fe-4S] cluster as a cofactor.

The protein localises to the cell inner membrane. It carries out the reaction methanophenazine + reduced coenzyme F420-(gamma-L-Glu)(n) = dihydromethanophenazine + oxidized coenzyme F420-(gamma-L-Glu)(n) + H(+). Functionally, component of the F(420)H(2) dehydrogenase (FPO complex) which is part of the energy-conserving F(420)H(2):heterodisulfide oxidoreductase system. The membrane-bound electron transfer system of the complex plays an important role in the metabolism of methylotrophic methanogens when the organisms grow on methanol or methylamines. Catalyzes the oxidation of methanophenazine to dihydromethanophenazine. It shuttles electrons from F(420)H(2), via FAD and iron-sulfur (Fe-S) centers, to methanophenazine (an electron carrier in the membrane). It couples the redox reaction to proton translocation (for every two electrons transferred, two hydrogen ions are translocated across the cytoplasmic membrane), and thus conserves the redox energy in a proton gradient. It also catalyzes the oxidation of F(420)H(2) with quinones such as 2,3-dimethyl-1,4-naphthoquinone, 2-methyl-1,4-naphthoquinone and tetramethyl-p-benzoquinone. The polypeptide is F(420)H(2) dehydrogenase subunit B (fpoB) (Methanosarcina mazei (strain ATCC BAA-159 / DSM 3647 / Goe1 / Go1 / JCM 11833 / OCM 88) (Methanosarcina frisia)).